The sequence spans 324 residues: Geranylgeranyl pyrophosphate synthase dpmpD (324 aa).

Positions 50, 53, and 82 each coordinate isopentenyl diphosphate. 2 residues coordinate Mg(2+): Asp89 and Asp93. Residue Arg98 participates in dimethylallyl diphosphate binding. Arg99 is a binding site for isopentenyl diphosphate. Positions 176, 177, and 210 each coordinate dimethylallyl diphosphate. Asp213 lines the Mg(2+) pocket. Dimethylallyl diphosphate is bound by residues Asn217, Lys227, and Lys237.

This sequence belongs to the FPP/GGPP synthase family. Requires Mg(2+) as cofactor.

The enzyme catalyses isopentenyl diphosphate + dimethylallyl diphosphate = (2E)-geranyl diphosphate + diphosphate. It catalyses the reaction isopentenyl diphosphate + (2E)-geranyl diphosphate = (2E,6E)-farnesyl diphosphate + diphosphate. The catalysed reaction is isopentenyl diphosphate + (2E,6E)-farnesyl diphosphate = (2E,6E,10E)-geranylgeranyl diphosphate + diphosphate. It functions in the pathway secondary metabolite biosynthesis; terpenoid biosynthesis. Geranylgeranyl pyrophosphate synthase; part of the gene cluster that mediates the biosynthesis of diterpenoid pyrones. The first step of the pathway is the synthesis of the alpha-pyrone moiety by the polyketide synthase dpmpA via condensation of one acetyl-CoA starter unit with 3 malonyl-CoA units and 2 methylations. The alpha-pyrone is then combined with geranylgeranyl pyrophosphate (GGPP) formed by the GGPP synthase dpmpD through the action of the prenyltransferase dpmpC to yield a linear alpha-pyrone diterpenoid. Subsequent steps in the diterpenoid pyrone biosynthetic pathway involve the decalin core formation, which is initiated by the epoxidation of the C10-C11 olefin by the FAD-dependent oxidoreductase dpmpE, and is followed by a cyclization cascade catalyzed by the terpene cyclase dpmpB. The short chain dehydrogenase/reductase dpmpG then oxidizes the 8S hydroxy group to a ketone and the short chain dehydrogenase/reductase dpmpH reduces the ketone to the 8R hydroxy group to yield higginsianin B. Higginsianin B is further methylated by the methyltransferase dpmpI to produce the intermediate named FDDP B. The cytochrome P450 monooxygenase dpmpJ then oxidizes the C-26 methyl to primary alcohol, producing the final diterpenoid pyrone with a C-26 primary alcohol on the gamma-pyrone moiety named FDDP C. The protein is Geranylgeranyl pyrophosphate synthase dpmpD of Macrophomina phaseolina (strain MS6) (Charcoal rot fungus).